Consider the following 239-residue polypeptide: Carboxy-S-adenosyl-L-methionine synthase (239 aa).

Residues Y35, 64–66 (GSS), 114–115 (DL), N129, and R196 contribute to the S-adenosyl-L-methionine site.

Belongs to the class I-like SAM-binding methyltransferase superfamily. Cx-SAM synthase family. Homodimer.

The enzyme catalyses prephenate + S-adenosyl-L-methionine = carboxy-S-adenosyl-L-methionine + 3-phenylpyruvate + H2O. Functionally, catalyzes the conversion of S-adenosyl-L-methionine (SAM) to carboxy-S-adenosyl-L-methionine (Cx-SAM). This Helicobacter hepaticus (strain ATCC 51449 / 3B1) protein is Carboxy-S-adenosyl-L-methionine synthase.